A 427-amino-acid polypeptide reads, in one-letter code: Terminal nucleotidyltransferase 5B (427 aa).

The segment at 1 to 49 (MMPSESGAESLEQPAAQVGTGAASAVATAGAAGGGPDPEASSASLGRHQ) is disordered. Residues 15–30 (AAQVGTGAASAVATAG) are compositionally biased toward low complexity.

It belongs to the TENT family.

Its subcellular location is the cytoplasm. The protein resides in the nucleus. The enzyme catalyses RNA(n) + ATP = RNA(n)-3'-adenine ribonucleotide + diphosphate. Its function is as follows. Catalyzes the transfer of one adenosine molecule from an ATP to an mRNA poly(A) tail bearing a 3'-OH terminal group in an ATP hydrolysis-dependent manner. May be involved in maintaining the translation efficiency of at least some genes through preventing degradation of their mRNAs. Prefers RNA molecules that are adenosine-rich close to 3'-end. In addition, may inhibit cell proliferation and cell cycle progression through ubiquitination of beta-catenin/CTNNB1. The chain is Terminal nucleotidyltransferase 5B from Mus musculus (Mouse).